Reading from the N-terminus, the 1755-residue chain is Transposon Ty1-MR2 Gag-Pol polyprotein (1755 aa).

Polar residues-rich tracts occupy residues 1-10 (MESQQLSNYP), 48-60 (TKAN…TPAS), and 127-152 (QSQF…GNTF). Disordered stretches follow at residues 1–93 (MESQ…MMTQ), 126–173 (PQSQ…RPPP), and 352–421 (GSRN…SKST). Low complexity predominate over residues 153–165 (TDSSSADSDMTST). The segment at 299 to 401 (NNGIHINNKV…NSKSKTARAH (103 aa)) is RNA-binding. A compositionally biased stretch (low complexity) spans 402–418 (NVSTSNNSPSTDNDSIS). S416 is modified (phosphoserine). The active-site For protease activity; shared with dimeric partner is D461. An integrase-type zinc finger-like region spans residues 583 to 640 (NVHTSESTRKYPYPFIHRMLAHANAQTIRYSLKNNTITYFNESDVDWSSAIDYQCPDC). An Integrase catalytic domain is found at 660–835 (NSYEPFQYLH…AGLDISTLLP (176 aa)). Mg(2+) contacts are provided by D671 and D736. 3 disordered regions span residues 956-1087 (SKAV…ETEK), 1092-1111 (RSPS…NIVP), and 1130-1186 (DLPL…EDNE). The span at 960-969 (SPTDSTPPST) shows a compositional bias: low complexity. Residues 1005–1015 (STPQISNIEST) are compositionally biased toward polar residues. A compositionally biased stretch (basic and acidic residues) spans 1038–1053 (ESSHASKSKDFRHSDS). Polar residues-rich tracts occupy residues 1054–1082 (YSEN…QISD) and 1101–1111 (PENNSSHNIVP). Positions 1178–1212 (KKRSLEDNETEIKVSRDTWNTKNMRSLEPPRSKKR) match the Bipartite nuclear localization signal motif. The region spanning 1338–1476 (NNYYITQLDI…DILGLEIKYQ (139 aa)) is the Reverse transcriptase Ty1/copia-type domain. Positions 1346, 1427, 1428, 1610, 1652, and 1685 each coordinate Mg(2+). One can recognise an RNase H Ty1/copia-type domain in the interval 1610 to 1752 (DASYGNQPYY…IKTFKLLTNK (143 aa)).

As to quaternary structure, the capsid protein forms a homotrimer, from which the VLPs are assembled. The protease is a homodimer, whose active site consists of two apposed aspartic acid residues. In terms of processing, initially, virus-like particles (VLPs) are composed of the structural unprocessed proteins Gag and Gag-Pol, and also contain the host initiator methionine tRNA (tRNA(i)-Met) which serves as a primer for minus-strand DNA synthesis, and a dimer of genomic Ty RNA. Processing of the polyproteins occurs within the particle and proceeds by an ordered pathway, called maturation. First, the protease (PR) is released by autocatalytic cleavage of the Gag-Pol polyprotein yielding capsid protein p45 and a Pol-p154 precursor protein. This cleavage is a prerequisite for subsequent processing of Pol-p154 at the remaining sites to release the mature structural and catalytic proteins. Maturation takes place prior to the RT reaction and is required to produce transposition-competent VLPs.

It is found in the cytoplasm. The protein localises to the nucleus. It catalyses the reaction DNA(n) + a 2'-deoxyribonucleoside 5'-triphosphate = DNA(n+1) + diphosphate. The catalysed reaction is Endonucleolytic cleavage to 5'-phosphomonoester.. Its function is as follows. Capsid protein (CA) is the structural component of the virus-like particle (VLP), forming the shell that encapsulates the retrotransposons dimeric RNA genome. The particles are assembled from trimer-clustered units and there are holes in the capsid shells that allow for the diffusion of macromolecules. CA also has nucleocapsid-like chaperone activity, promoting primer tRNA(i)-Met annealing to the multipartite primer-binding site (PBS), dimerization of Ty1 RNA and initiation of reverse transcription. The aspartyl protease (PR) mediates the proteolytic cleavages of the Gag and Gag-Pol polyproteins after assembly of the VLP. Functionally, reverse transcriptase/ribonuclease H (RT) is a multifunctional enzyme that catalyzes the conversion of the retro-elements RNA genome into dsDNA within the VLP. The enzyme displays a DNA polymerase activity that can copy either DNA or RNA templates, and a ribonuclease H (RNase H) activity that cleaves the RNA strand of RNA-DNA heteroduplexes during plus-strand synthesis and hydrolyzes RNA primers. The conversion leads to a linear dsDNA copy of the retrotransposon that includes long terminal repeats (LTRs) at both ends. In terms of biological role, integrase (IN) targets the VLP to the nucleus, where a subparticle preintegration complex (PIC) containing at least integrase and the newly synthesized dsDNA copy of the retrotransposon must transit the nuclear membrane. Once in the nucleus, integrase performs the integration of the dsDNA into the host genome. The chain is Transposon Ty1-MR2 Gag-Pol polyprotein (TY1B-MR2) from Saccharomyces cerevisiae (strain ATCC 204508 / S288c) (Baker's yeast).